The primary structure comprises 840 residues: Sorting nexin-25 (840 aa).

The 164-residue stretch at 1–164 folds into the PXA domain; sequence MDRVLRDVFD…MLLRQLEYRE (164 aa). Residues 287–401 enclose the RGS domain; that stretch reads QFEDIMTNPF…LVSDLYEKLM (115 aa). A disordered region spans residues 404 to 437; it reads EEEEEPDAQLASEKDELGSGGEAGEEAVEGTSGV. A coiled-coil region spans residues 446–494; it reads IKLRELNEKLEYKRQALSSIQNAPKPDKKIISKLKDEILLIEKECTALQ. Residues 508 to 628 enclose the PX domain; the sequence is GLWRASITSA…AFLSPSPDYL (121 aa). Phosphoserine is present on Ser665.

Belongs to the sorting nexin family.

It localises to the endosome membrane. Its function is as follows. May be involved in several stages of intracellular trafficking. The chain is Sorting nexin-25 (Snx25) from Mus musculus (Mouse).